Here is a 454-residue protein sequence, read N- to C-terminus: MAANIAMFADIEDYDDTRSCEYGYGTCELMDVDGVVASFDEGMLSASESIYSSPAQKRLALPPPKATSPTALYQRLQAELGFPEGQAMLFAMEKWNEDMFSAIPVHVDLYTEIALLSTSVNEVVKAGLDSLPIPTNYIPEVDLNAHGSEPFPEVPALEDELETYVISAQRFYLSELRAREEHYSRLLRGYCVALLHYLYGSAKRQLRGAGSDSALMHKFKQVVRDRYYRETANLARLLYLHLYISVTREVSWRLHASQVVNQGIFVSLHYTWPQRRKFECLFHPVLFNHGVVILENDPLEFNDLQRINYRRRELGLPLIRAGLIEEENLPLESEPTFSGKLPRTIGFLTHQIRTKMEAYSNAHPSTPLFPLAEHSYSKRIDGRLSYGTTAEAMMDPPSPSAVLPGDPVPPLTVGIRQTAETLALPSNLTLQSMETDVLDYSSISGDELNQMFDI.

The protein belongs to the herpesviridae tegument protein VP16 protein family. As to quaternary structure, associates with the VP16-induced complex; binding to host HCFC1 activates VP16 for association with the octamer motif-binding host protein POU2F1, to form a multiprotein-DNA complex responsible for activating transcription of the viral immediate early genes.

It is found in the virion tegument. The protein localises to the host nucleus. Functionally, transcriptional activator of immediate-early (IE) gene products (alpha genes). Acts as a key activator of lytic infection by initiating the lytic program through the assembly of the transcriptional regulatory VP16-induced complex composed of VP16 and two cellular factors, HCFC1 and POU2F1. VP16-induced complex represents a regulatory switch: when it is on, it promotes IE-gene expression and thus lytic infection, and when it is off, it limits IE-gene transcription favoring latent infection. In terms of biological role, may play a role in the aggregation of tegument proteins around nucleocapsids during virus morphogenesis. The polypeptide is Tegument protein VP16 homolog (12) (Equine herpesvirus 4 (strain 1942) (EHV-4)).